The sequence spans 313 residues: Solute carrier family 35 member E3 (313 aa).

10 helical membrane passes run Ile-14 to Trp-34, Gly-40 to Ile-60, Ile-77 to Ser-97, Ile-100 to Tyr-122, Ile-130 to Tyr-146, Leu-153 to Val-173, Leu-187 to Glu-207, Ile-215 to Phe-235, Thr-252 to Phe-272, and Pro-275 to Thr-295.

The protein belongs to the TPT transporter family. SLC35E subfamily.

It localises to the membrane. Functionally, putative transporter. The sequence is that of Solute carrier family 35 member E3 (slc35e3) from Danio rerio (Zebrafish).